The chain runs to 194 residues: 7-methyl-GTP pyrophosphatase (194 aa).

Asp-67 acts as the Proton acceptor in catalysis.

It belongs to the Maf family. YceF subfamily. The cofactor is a divalent metal cation.

It localises to the cytoplasm. It catalyses the reaction N(7)-methyl-GTP + H2O = N(7)-methyl-GMP + diphosphate + H(+). In terms of biological role, nucleoside triphosphate pyrophosphatase that hydrolyzes 7-methyl-GTP (m(7)GTP). May have a dual role in cell division arrest and in preventing the incorporation of modified nucleotides into cellular nucleic acids. This chain is 7-methyl-GTP pyrophosphatase, found in Pseudoalteromonas atlantica (strain T6c / ATCC BAA-1087).